Consider the following 857-residue polypeptide: Protein dalmatian (857 aa).

Disordered regions lie at residues 1-50 and 146-194; these read MVRT…KLSI and VQKS…FFHR. Composition is skewed to polar residues over residues 146–156 and 165–176; these read VQKSTQPQNIK and SPCQQRIRSKSP. A phosphoserine mark is found at Ser-173, Ser-175, Ser-184, and Ser-222. Residues 251–271 are compositionally biased toward basic residues; it reads GKPRAKRTAKKVRPVGNRRKV. Residues 251–281 form a disordered region; it reads GKPRAKRTAKKVRPVGNRRKVSTKDNEPEPV. At Ser-405 the chain carries Phosphoserine. Disordered stretches follow at residues 470–514 and 737–830; these read SICP…NAEN and PPRP…RDIE. A compositionally biased stretch (basic and acidic residues) spans 771-781; it reads KQPRRTYVKER. Positions 797–806 are enriched in acidic residues; the sequence is SESEDEDEQD. The segment covering 807–816 has biased composition (basic and acidic residues); the sequence is SHDKSLDSPE. The segment covering 817–826 has biased composition (basic residues); the sequence is KKRHHVKRPR.

Its subcellular location is the nucleus. It localises to the chromosome. Its function is as follows. Regulator of sister chromatid cohesion in mitosis. Probably involved in development of the central nervous system. The protein is Protein dalmatian (dmt) of Drosophila melanogaster (Fruit fly).